The following is a 322-amino-acid chain: Breast cancer metastasis-suppressor 1-like protein (322 aa).

Basic and acidic residues predominate over residues 1-16 (MPVHSREKKESNHNDM). The tract at residues 1–56 (MPVHSREKKESNHNDMEVDYPENEGSSSEEDDSDSSSGSEEGDSSEMDDEDCERRR) is disordered. Over residues 17–51 (EVDYPENEGSSSEEDDSDSSSGSEEGDSSEMDDED) the composition is skewed to acidic residues. Coiled-coil stretches lie at residues 50–99 (EDCE…QAQE) and 147–178 (EKLL…ITSE).

Belongs to the BRMS1 family.

The protein resides in the nucleus. In terms of biological role, involved in the histone deacetylase (HDAC1)-dependent transcriptional repression activity. This chain is Breast cancer metastasis-suppressor 1-like protein (brms1l), found in Xenopus laevis (African clawed frog).